The following is a 1174-amino-acid chain: Ankyrin repeat and LEM domain-containing protein 2 homolog (1174 aa).

Composition is skewed to low complexity over residues 37 to 56, 150 to 164, 174 to 198, and 205 to 219; these read NPAS…SAAS, SSPT…SSPT, LGSN…SSSN, and QQQM…PQQP. 2 disordered regions span residues 37-74 and 141-230; these read NPAS…YEDP and PIIS…PFRA. Residues 338–367 form an ANK repeat; the sequence is RGETPLHFAAKNGHVAMVEVLVSYPECKSL. Disordered stretches follow at residues 519–543 and 961–981; these read AEAT…HNNN and GSSS…SPGI. Residues 521–532 are compositionally biased toward polar residues; it reads ATSSPKPTKNVP. A compositionally biased stretch (low complexity) spans 533 to 543; the sequence is NGTNECEHNNN.

It belongs to the ANKLE2 family.

It is found in the endoplasmic reticulum. The protein resides in the nucleus envelope. The protein localises to the cytoplasm. Functionally, involved in brain development probably by regulating asymmetric division of neuroblasts. Regulates neuroblast asymmetric cell division by controlling asymmetric protein localization of Mira, Baz, Par-6 and aPKC, and spindle alignment. Also, regulates the localization of kinase Ball during mitosis, specifically maintaining Ball in the nucleus during interphase. Required for proper ER and nuclear envelope morphology in neuroblasts. In Drosophila melanogaster (Fruit fly), this protein is Ankyrin repeat and LEM domain-containing protein 2 homolog.